Reading from the N-terminus, the 556-residue chain is Formate--tetrahydrofolate ligase (556 aa).

65–72 provides a ligand contact to ATP; the sequence is TPAGEGKT.

The protein belongs to the formate--tetrahydrofolate ligase family.

The enzyme catalyses (6S)-5,6,7,8-tetrahydrofolate + formate + ATP = (6R)-10-formyltetrahydrofolate + ADP + phosphate. Its pathway is one-carbon metabolism; tetrahydrofolate interconversion. The protein is Formate--tetrahydrofolate ligase of Hyphomonas neptunium (strain ATCC 15444).